Here is a 565-residue protein sequence, read N- to C-terminus: Phosphatidylinositol 4-kinase gamma 4 (565 aa).

Ubiquitin-like domains lie at 32–104 (IVIF…LVVR) and 109–187 (RAIS…RPAK). The 286-residue stretch at 257 to 542 (GYLPVMSTEG…AILPGTSEET (286 aa)) folds into the PI3K/PI4K catalytic domain. The tract at residues 263-269 (STEGSGG) is G-loop. ATP contacts are provided by residues 264-270 (TEGSGGV) and lysine 286. Residues 291–311 (EPMAKNNPRGLPLSTDGEGLK) are disordered. 369-372 (QLFV) is a binding site for ATP. Residues 402–410 (ANADRHAGN) are catalytic loop. The interval 425–451 (PIDHGYCLPEKFEDCTFEWLYWPQARE) is activation loop. Residue aspartate 427 participates in ATP binding.

Belongs to the PI3/PI4-kinase family. Type II PI4K subfamily. As to quaternary structure, interacts with FTIP1 and RPN10. In terms of tissue distribution, specifically expressed in the phloem including companion cells.

The protein resides in the nucleus. It is found in the endoplasmic reticulum. It carries out the reaction a 1,2-diacyl-sn-glycero-3-phospho-(1D-myo-inositol) + ATP = a 1,2-diacyl-sn-glycero-3-phospho-(1D-myo-inositol 4-phosphate) + ADP + H(+). Its function is as follows. The phosphorylation of phosphatidylinositol (PI) to PI4P is the first committed step in the generation of phosphatidylinositol 4,5-bisphosphate (PIP2), a precursor of the second messenger inositol 1,4,5-trisphosphate (InsP3). Involved in the control of flowering under long day conditions by promoting degradation of FTIP1. Recruits FTIP1 for degradation by the 26S proteasome in leaves, which affects RFT1 transport to the shoot apical meristem (SAM). This chain is Phosphatidylinositol 4-kinase gamma 4, found in Oryza sativa subsp. japonica (Rice).